The primary structure comprises 148 residues: Calmodulin (148 aa).

Ala-2 carries the post-translational modification N-acetylalanine. EF-hand domains lie at 8 to 43 (DQIS…LGQN), 44 to 79 (PTEA…KMKD), 81 to 116 (DSEE…LGEK), and 116 to 148 (KLTD…MMAK). Residues Asp-21, Asp-23, Asp-25, Cys-27, Glu-32, Asp-57, Asp-59, Asn-61, Thr-63, Glu-68, Asp-94, Asp-96, Asn-98, and Glu-105 each contribute to the Ca(2+) site. Lys-116 carries the N6,N6,N6-trimethyllysine modification. Asp-129, Asp-131, Asp-133, Gln-135, and Glu-140 together coordinate Ca(2+).

The protein belongs to the calmodulin family.

Its function is as follows. Calmodulin mediates the control of a large number of enzymes, ion channels and other proteins by Ca(2+). Among the enzymes to be stimulated by the calmodulin-Ca(2+) complex are a number of protein kinases and phosphatases. The sequence is that of Calmodulin (CAMF1) from Fagus sylvatica (Beechnut).